A 380-amino-acid chain; its full sequence is Homoserine O-acetyltransferase (380 aa).

Positions 59–363 (NVVMVLHALT…IYGHDGFLVE (305 aa)) constitute an AB hydrolase-1 domain. The active-site Nucleophile is Ser-164. Substrate is bound at residue Arg-234. Catalysis depends on residues Asp-327 and His-357. Asp-358 contributes to the substrate binding site.

This sequence belongs to the AB hydrolase superfamily. MetX family. Homodimer.

The protein localises to the cytoplasm. It catalyses the reaction L-homoserine + acetyl-CoA = O-acetyl-L-homoserine + CoA. It participates in amino-acid biosynthesis; L-methionine biosynthesis via de novo pathway; O-acetyl-L-homoserine from L-homoserine: step 1/1. Its function is as follows. Transfers an acetyl group from acetyl-CoA to L-homoserine, forming acetyl-L-homoserine. The chain is Homoserine O-acetyltransferase from Mycolicibacterium smegmatis (strain ATCC 700084 / mc(2)155) (Mycobacterium smegmatis).